Consider the following 1039-residue polypeptide: MVMVDALNLGRRLRVRSTAYVAGEPVPFFWPMRTFIHHNPLYGLEHMPFEQAVRRGAELFHARMFLPRSDYQRWQREGKVRQDTLAEEIARRAQALPAVPGIDWPRWLQALMQSAHDRDVVVPGVRAPDVHAALHGQPPSAQAVDVAVLLPALEQRLHGLTLPEAVDALWGTRLADELDELVIKSYLDFFDEDQSSWRMPGRERGLFAAWSEIARRNARMFLRGLHVRRTLGRVQDPESAVVHVMEEMGIDPDAWSAYFTRELTRLHGWTGFVRWRSSAKHYYWAQRYPAEVVDLLAVRLVVGLALLQESARHRRTPVRREQLDALLHERGAECLLRNALHSGEVLPDWAQRIDDTLSRGGSKRCEALLQRYWPLWQARQGQDQAAALRELAAAADATAALEVLSPEDIAGLIQGLQEFARQEGMVWTLAMEAQAIDQLLAQVQVPQDLAAGKRPFAQAWFCIDVRAEPIRRHLERVGDYQTFGIAGFFGVPVGFLGYGKGSESHFCPAVVTPKNLVLELPAELDPEEDDLLSTLGHVLHDLKSSVLSPYVTVEAVGMLFGLDLFGKTLAPLGYSRWRNRIDADKPVTRLLVDKLTREQADSIIRTLQRAMIVKALHAELHIERERVDDDMIRELRETALRHREGPTRLQRTFGVSDKQEAEFIDKLREVYRVDADYASYQLVRLGRIGYSLDEQVNYVHTALTMIGLTKTFSRFVLIVGHSGQTENNPYESALDCGACGGASGLVNARVLAQMANKTAVRERLRGMGIDIPDDTWFLPALHNTTTDAIELSDLVLLPPRHLVYLDRLRNGLRAASRLAAAERMPKLLPQARAIEPAQAWRLAHRLAVDWAQVRPEWGLSKNVYGIIGRRSLSERADLQGRPFLMSYDWRCDPKGRLLENLLAAAVVVGQWINLEHFFSTVDNARLGSGSKAYHNVAGRFGVMTGSLSDLRTGLPAQTVMREGQPYHEPMRMIALIEAPLDFAGRALQSVVKVKSLVLGGWIRAIVIDPTQGYKPFVFNNGQWEERPPLVAPAEEEHAA.

Zn(2+) contacts are provided by Cys462, Asp464, His721, and Cys736.

The protein belongs to the inorganic carbon transporter (TC 9.A.2) DabA family. In terms of assembly, forms a complex with DabB. Requires Zn(2+) as cofactor.

The protein resides in the cell inner membrane. Part of an energy-coupled inorganic carbon pump. In Nitrobacter hamburgensis (strain DSM 10229 / NCIMB 13809 / X14), this protein is Probable inorganic carbon transporter subunit DabA 1.